Reading from the N-terminus, the 256-residue chain is Kallikrein 1-related peptidase-like b4 (256 aa).

The N-terminal stretch at 1–17 (MWFLILFLALSLGGIDA) is a signal peptide. The activation peptide homolog stretch occupies residues 18-24 (APPVQSQ). The region spanning 18–253 (APPVQSQVDC…FSSWIRETMA (236 aa)) is the Peptidase S1 domain. Cysteine 45 and cysteine 61 are joined by a disulfide. Zn(2+) is bound by residues glutamate 77 and histidine 84. Cystine bridges form between cysteine 147–cysteine 214, cysteine 179–cysteine 193, and cysteine 204–cysteine 229.

This sequence belongs to the peptidase S1 family. Kallikrein subfamily. As to quaternary structure, 7S nerve growth factor is composed of two alpha chains, a beta dimer composed of identical chains, and two gamma chains. Zn(2+) is required as a cofactor. In terms of processing, the presence of Gln-24 prevents cleavage of the activation peptide, which remains attached at the amino end of the mature alpha chain.

This is Kallikrein 1-related peptidase-like b4 (Klk1b4) from Mus musculus (Mouse).